We begin with the raw amino-acid sequence, 660 residues long: Rhamnogalacturonate lyase B (660 aa).

Positions 1 to 18 (MRLGVCFSLAAAASVARA) are cleaved as a signal peptide. Residues Asn25, Asn109, Asn142, and Asn284 are each glycosylated (N-linked (GlcNAc...) asparagine). A disordered region spans residues 446–466 (RLGTPDKSSGEFRHGAARDPT). The span at 453–466 (SSGEFRHGAARDPT) shows a compositional bias: basic and acidic residues. 3 N-linked (GlcNAc...) asparagine glycosylation sites follow: Asn524, Asn566, and Asn635.

Belongs to the polysaccharide lyase 4 family.

It is found in the secreted. It carries out the reaction Endotype eliminative cleavage of L-alpha-rhamnopyranosyl-(1-&gt;4)-alpha-D-galactopyranosyluronic acid bonds of rhamnogalacturonan I domains in ramified hairy regions of pectin leaving L-rhamnopyranose at the reducing end and 4-deoxy-4,5-unsaturated D-galactopyranosyluronic acid at the non-reducing end.. In terms of biological role, pectinolytic enzymes consist of four classes of enzymes: pectin lyase, polygalacturonase, pectin methylesterase and rhamnogalacturonase. Degrades the rhamnogalacturonan I (RG-I) backbone of pectin. Active against linseed rhamnogalacturonan. The sequence is that of Rhamnogalacturonate lyase B (rglB) from Emericella nidulans (strain FGSC A4 / ATCC 38163 / CBS 112.46 / NRRL 194 / M139) (Aspergillus nidulans).